A 149-amino-acid polypeptide reads, in one-letter code: D-aminoacyl-tRNA deacylase (149 aa).

The short motif at 137–138 (GP) is the Gly-cisPro motif, important for rejection of L-amino acids element.

The protein belongs to the DTD family. As to quaternary structure, homodimer.

Its subcellular location is the cytoplasm. The enzyme catalyses glycyl-tRNA(Ala) + H2O = tRNA(Ala) + glycine + H(+). It catalyses the reaction a D-aminoacyl-tRNA + H2O = a tRNA + a D-alpha-amino acid + H(+). In terms of biological role, an aminoacyl-tRNA editing enzyme that deacylates mischarged D-aminoacyl-tRNAs. Also deacylates mischarged glycyl-tRNA(Ala), protecting cells against glycine mischarging by AlaRS. Acts via tRNA-based rather than protein-based catalysis; rejects L-amino acids rather than detecting D-amino acids in the active site. By recycling D-aminoacyl-tRNA to D-amino acids and free tRNA molecules, this enzyme counteracts the toxicity associated with the formation of D-aminoacyl-tRNA entities in vivo and helps enforce protein L-homochirality. The sequence is that of D-aminoacyl-tRNA deacylase from Anaeromyxobacter dehalogenans (strain 2CP-C).